The primary structure comprises 89 residues: Small ribosomal subunit protein uS15 (89 aa).

This sequence belongs to the universal ribosomal protein uS15 family. Part of the 30S ribosomal subunit. Forms a bridge to the 50S subunit in the 70S ribosome, contacting the 23S rRNA.

Functionally, one of the primary rRNA binding proteins, it binds directly to 16S rRNA where it helps nucleate assembly of the platform of the 30S subunit by binding and bridging several RNA helices of the 16S rRNA. Forms an intersubunit bridge (bridge B4) with the 23S rRNA of the 50S subunit in the ribosome. This Oceanobacillus iheyensis (strain DSM 14371 / CIP 107618 / JCM 11309 / KCTC 3954 / HTE831) protein is Small ribosomal subunit protein uS15.